Consider the following 318-residue polypeptide: Malate dehydrogenase (318 aa).

NAD(+)-binding positions include 10-15 (GGGQIG) and Asp-34. Residues Arg-83 and Arg-89 each contribute to the substrate site. Residues Asn-96 and 119–121 (ISN) contribute to the NAD(+) site. 2 residues coordinate substrate: Asn-121 and Arg-152. The Proton acceptor role is filled by His-176.

The protein belongs to the LDH/MDH superfamily. MDH type 3 family.

It carries out the reaction (S)-malate + NAD(+) = oxaloacetate + NADH + H(+). Catalyzes the reversible oxidation of malate to oxaloacetate. The sequence is that of Malate dehydrogenase from Geotalea daltonii (strain DSM 22248 / JCM 15807 / FRC-32) (Geobacter daltonii).